The sequence spans 317 residues: Pseudouridine-5'-phosphate glycosidase (317 aa).

E27 (proton donor) is an active-site residue. 2 residues coordinate substrate: K89 and V109. D141 provides a ligand contact to Mn(2+). Substrate is bound at residue 143–145; that stretch reads SAD. Residue K162 is the Nucleophile of the active site.

It belongs to the pseudouridine-5'-phosphate glycosidase family. As to quaternary structure, homotrimer. Mn(2+) is required as a cofactor.

The catalysed reaction is D-ribose 5-phosphate + uracil = psi-UMP + H2O. Catalyzes the reversible cleavage of pseudouridine 5'-phosphate (PsiMP) to ribose 5-phosphate and uracil. Functions biologically in the cleavage direction, as part of a pseudouridine degradation pathway. The protein is Pseudouridine-5'-phosphate glycosidase of Sorangium cellulosum (strain So ce56) (Polyangium cellulosum (strain So ce56)).